Reading from the N-terminus, the 543-residue chain is Hydroxylamine reductase (543 aa).

Positions 5, 8, 17, and 23 each coordinate [4Fe-4S] cluster. Residues histidine 236, glutamate 260, cysteine 304, cysteine 398, cysteine 426, cysteine 451, glutamate 486, and lysine 488 each coordinate hybrid [4Fe-2O-2S] cluster. Cysteine 398 is subject to Cysteine persulfide.

It belongs to the HCP family. The cofactor is [4Fe-4S] cluster. Requires hybrid [4Fe-2O-2S] cluster as cofactor.

The protein resides in the cytoplasm. It catalyses the reaction A + NH4(+) + H2O = hydroxylamine + AH2 + H(+). Catalyzes the reduction of hydroxylamine to form NH(3) and H(2)O. In Bacteroides fragilis (strain ATCC 25285 / DSM 2151 / CCUG 4856 / JCM 11019 / LMG 10263 / NCTC 9343 / Onslow / VPI 2553 / EN-2), this protein is Hydroxylamine reductase.